A 252-amino-acid chain; its full sequence is MRILLTNDDGIHAEGLASLERVARTLSDDVWVVAPEQDQSGYAHSLSISEPLRLRKIGEKHFAVRGTPTDCVIMGVKKILPGAPDVILSGINSGANIADDVTYSGTVAGAMEGALLGIRSIALSQGYSYVGEDRIVPYETTEALAPALLKKLVATPLPDGVLLNVNFPNCLPEEVVGTVVTMQGKLVHSLWVDERRDGRGLPYYWLRFGREPVEGKQGTDLHALRNRLVSVTPLQLDLTAHEIRDQLSKALA.

A divalent metal cation contacts are provided by Asp8, Asp9, Ser40, and Asn92.

This sequence belongs to the SurE nucleotidase family. Requires a divalent metal cation as cofactor.

Its subcellular location is the cytoplasm. It carries out the reaction a ribonucleoside 5'-phosphate + H2O = a ribonucleoside + phosphate. Functionally, nucleotidase that shows phosphatase activity on nucleoside 5'-monophosphates. The sequence is that of 5'-nucleotidase SurE from Mesorhizobium japonicum (strain LMG 29417 / CECT 9101 / MAFF 303099) (Mesorhizobium loti (strain MAFF 303099)).